Here is an 810-residue protein sequence, read N- to C-terminus: Phospholipase D alpha 1 (810 aa).

One can recognise a C2 domain in the interval 1 to 126 (MAQHLLHGTL…INGEEVDQWV (126 aa)). Asp187 contacts Ca(2+). The region spanning 327–366 (TMFTHHQKIVVVDSEMPSRGGSEMRRIVSFVGGIDLCDGR) is the PLD phosphodiesterase 1 domain. Active-site residues include His332, Lys334, and Asp339. His332 provides a ligand contact to a 1,2-diacyl-sn-glycero-3-phosphate. 2 residues coordinate Ca(2+): His372 and His406. Residues Gln522 and His661 each coordinate a 1,2-diacyl-sn-glycero-3-phosphate. The PLD phosphodiesterase 2 domain maps to 656 to 683 (FMIYVHTKMMIVDDEYIIIGSANINQRS). Catalysis depends on residues His661, Lys663, and Asp668. Position 722 (Glu722) interacts with Ca(2+).

It belongs to the phospholipase D family. C2-PLD subfamily. Interacts with GPA1. This binding inhibits PLDALPHA1 activity and is relieved by GTP. Ca(2+) is required as a cofactor. Highly expressed in roots, stems and flowers, moderately in leaves, seedlings and siliques. Not detected in seeds.

It is found in the cytoplasm. Its subcellular location is the cell membrane. It localises to the mitochondrion membrane. The protein localises to the microsome membrane. The protein resides in the vacuole. It is found in the cytoplasmic vesicle. Its subcellular location is the clathrin-coated vesicle. The catalysed reaction is a 1,2-diacyl-sn-glycero-3-phosphocholine + H2O = a 1,2-diacyl-sn-glycero-3-phosphate + choline + H(+). Not inhibited by neomycin. Functionally, hydrolyzes glycerol-phospholipids at the terminal phosphodiesteric bond to generate phosphatidic acids (PA). Plays an important role in various cellular processes, including phytohormone action and response to stress, characterized by acidification of the cell. Involved in wound induction of jasmonic acid. May be involved in membrane lipid remodeling. Probably involved in freezing tolerance by modulating the cold-responsive genes and accumulation of osmolytes. Can use phosphatidylcholine (PC), phosphatidylethanolamine (PE) and phosphatidylglycerol (PG) as substrates, both in presence or in absence of PIP2. Its main substrate is phosphatidylcholine. Stimulates the intrinsic GTPase activity of GPA1 upon binding. Mediates the abscisic acid effects on stomata through interaction with GPA1 and the production of phosphatidic acid that bind to ABI1. Involved in seed aging and deterioration. Involved in microtubule stabilization and salt tolerance. Involved in abscisic acid-induced stomatal closure. This chain is Phospholipase D alpha 1, found in Arabidopsis thaliana (Mouse-ear cress).